Here is a 157-residue protein sequence, read N- to C-terminus: Small ribosomal subunit protein uS7 (157 aa).

It belongs to the universal ribosomal protein uS7 family. As to quaternary structure, part of the 30S ribosomal subunit. Contacts proteins S9 and S11.

Its function is as follows. One of the primary rRNA binding proteins, it binds directly to 16S rRNA where it nucleates assembly of the head domain of the 30S subunit. Is located at the subunit interface close to the decoding center, probably blocks exit of the E-site tRNA. The sequence is that of Small ribosomal subunit protein uS7 from Desulfotalea psychrophila (strain LSv54 / DSM 12343).